We begin with the raw amino-acid sequence, 145 residues long: Large ribosomal subunit protein uL15 (145 aa).

The tract at residues 1–58 (MKLHELSPSEGSRKKRKRVGRGPGSGMGGTSTRGNKGHNQRSGGGTRPGFEGGQMPLH) is disordered. Gly residues-rich tracts occupy residues 21–31 (RGPGSGMGGTS) and 42–52 (SGGGTRPGFEG).

Belongs to the universal ribosomal protein uL15 family. In terms of assembly, part of the 50S ribosomal subunit.

In terms of biological role, binds to the 23S rRNA. The chain is Large ribosomal subunit protein uL15 from Desulforapulum autotrophicum (strain ATCC 43914 / DSM 3382 / VKM B-1955 / HRM2) (Desulfobacterium autotrophicum).